The primary structure comprises 223 residues: DNA mismatch repair protein MutH (223 aa).

The protein belongs to the MutH family.

It is found in the cytoplasm. Sequence-specific endonuclease that cleaves unmethylated GATC sequences. It is involved in DNA mismatch repair. This is DNA mismatch repair protein MutH from Shewanella baltica (strain OS195).